Reading from the N-terminus, the 496-residue chain is Glycerol kinase (496 aa).

Threonine 12 provides a ligand contact to ADP. The ATP site is built by threonine 12, threonine 13, and serine 14. Threonine 12 provides a ligand contact to sn-glycerol 3-phosphate. Arginine 16 provides a ligand contact to ADP. 3 residues coordinate sn-glycerol 3-phosphate: arginine 82, glutamate 83, and tyrosine 134. Arginine 82, glutamate 83, and tyrosine 134 together coordinate glycerol. Histidine 230 carries the post-translational modification Phosphohistidine; by HPr. Aspartate 244 lines the sn-glycerol 3-phosphate pocket. Aspartate 244 and glutamine 245 together coordinate glycerol. Residues threonine 266 and glycine 309 each coordinate ADP. Residues threonine 266, glycine 309, glutamine 313, and glycine 410 each coordinate ATP. Residues glycine 410 and asparagine 414 each contribute to the ADP site.

Belongs to the FGGY kinase family. Homotetramer and homodimer (in equilibrium). Post-translationally, the phosphoenolpyruvate-dependent sugar phosphotransferase system (PTS), including enzyme I, and histidine-containing protein (HPr) are required for the phosphorylation, which leads to the activation of the enzyme.

The catalysed reaction is glycerol + ATP = sn-glycerol 3-phosphate + ADP + H(+). Its pathway is polyol metabolism; glycerol degradation via glycerol kinase pathway; sn-glycerol 3-phosphate from glycerol: step 1/1. Activated by phosphorylation and inhibited by fructose 1,6-bisphosphate (FBP). In terms of biological role, key enzyme in the regulation of glycerol uptake and metabolism. Catalyzes the phosphorylation of glycerol to yield sn-glycerol 3-phosphate. In Bacillus velezensis (strain DSM 23117 / BGSC 10A6 / LMG 26770 / FZB42) (Bacillus amyloliquefaciens subsp. plantarum), this protein is Glycerol kinase.